The primary structure comprises 893 residues: DNA endonuclease RBBP8 (893 aa).

The tract at residues 22 to 45 (ELWTKLKEYHDKEVQGLQVKVTKL) is essential for binding to the MRN complex and for RPA focus formation on DNA damage. Positions 35-84 (VQGLQVKVTKLKKERILDAQRLEEFFTKNQQLRDQQKVLQETIKILEDRL) form a coiled coil. The segment at 45–160 (LKKERILDAQ…AELACEENII (116 aa)) is required for interaction with LMO4, probably by stabilizing the interaction through RPPB8 dimerization. Residues K62 and K115 each participate in a glycyl lysine isopeptide (Lys-Gly) (interchain with G-Cter in SUMO2) cross-link. The stretch at 117-138 (ITELMNEKNTLQEENKKLSEQL) forms a coiled coil. K193 is covalently cross-linked (Glycyl lysine isopeptide (Lys-Gly) (interchain with G-Cter in SUMO2)). 2 positions are modified to phosphoserine: S233 and S276. Residues 296–307 (MESARSKEDSLR) show a composition bias toward basic and acidic residues. The interval 296-324 (MESARSKEDSLRFSDSASKTPPQEFTTRA) is disordered. Polar residues predominate over residues 308 to 324 (FSDSASKTPPQEFTTRA). T315 carries the post-translational modification Phosphothreonine. 3 positions are modified to phosphoserine: S325, S326, and S348. Glycyl lysine isopeptide (Lys-Gly) (interchain with G-Cter in SUMO2) cross-links involve residues K359 and K377. S378 carries the post-translational modification Phosphoserine. Glycyl lysine isopeptide (Lys-Gly) (interchain with G-Cter in SUMO2) cross-links involve residues K394, K403, K409, and K437. The PXDLS motif motif lies at 489 to 493 (PLDLS). Residues 508-556 (NETSKNKLKQATIYEALKPIPKGSSSGRKALSGDCMPAKDSWETYCLQP) form a damage-recruitment motif region. K525 is covalently cross-linked (Glycyl lysine isopeptide (Lys-Gly) (interchain with G-Cter in SUMO2); alternate). Glycyl lysine isopeptide (Lys-Gly) (interchain with G-Cter in SUMO2) cross-links involve residues K529, K570, and K576. A Glycyl lysine isopeptide (Lys-Gly) (interchain with G-Cter in SUMO2); alternate cross-link involves residue K602. Glycyl lysine isopeptide (Lys-Gly) (interchain with G-Cter in SUMO2) cross-links involve residues K611, K636, and K638. A required for interaction with LMO4, probably by making physical contact with LMO4 region spans residues 639–683 (ALPSNQDTSFENIQWSVDPGADLSQYKMDVTVIDTKDSSHSRLGG). S662 carries the post-translational modification Phosphoserine; by ATM. Residue K674 forms a Glycyl lysine isopeptide (Lys-Gly) (interchain with G-Cter in SUMO2) linkage. Phosphoserine is present on S677. Residue K716 forms a Glycyl lysine isopeptide (Lys-Gly) (interchain with G-Cter in SUMO2) linkage. S720 bears the Phosphoserine mark. S742 is subject to Phosphoserine; by ATM. K778 is covalently cross-linked (Glycyl lysine isopeptide (Lys-Gly) (interchain with G-Cter in SUMO2)). The KLHL15-binding motif lies at 836–838 (FRY). A phosphothreonine mark is found at T843 and T855. K865 is covalently cross-linked (Glycyl lysine isopeptide (Lys-Gly) (interchain with G-Cter in SUMO2)). The segment at 869-893 (DLSPRPKRRQPYNAVFSPKGKEQRT) is disordered.

The protein belongs to the COM1/SAE2/CtIP family. As to quaternary structure, homotetramer; formed by antiparallel association of helical extensions protruding from the N-termini of two parallel coiled-coil dimers. Forms a dumbbell-shaped particle in which polar globular domains are held about 30 nm apart by a central rod. Homotetramerization is required for DNA-end resection and repair. Interacts (via the PXDLS motif) with CTBP1; the interaction is disrupted via binding of the adenovirus E1A to CTBP1. Component of the BRCA1-RBBP8 complex. Interacts (the Ser-326 phosphorylated form) with BRCA1 (via the C-terminal BRCT domains): the interaction occurs in the G2 phase, ubiquitinates RBBP8 and involves RBBP8 in BRCA1-dependent G2/M checkpoint control on DNA damage. Interacts with RB1. Interacts with the MRN complex. Interacts directly with MRE11; the interaction is required for efficient homologous recombination (HR) and regulation of the MRN complex. Interacts (when phosphorylated by CDK1) with NBN; promoting association with the MRN complex. Interacts with LMO4 (via the LIM zinc-binding 1 domain). Interacts with SIAH1. Interacts with RNF138. Interacts with EXD2. Interacts with CUL3 and KLHL15; this interaction leads to RBBP8 proteasomal degradation. Directly interacts with PIN1; this interaction depends upon RBBP8 phosphorylation, predominantly at Thr-315. Interacts with FZR1; this interaction leads to APC/C-mediated RBBP8 proteasomal degradation. Interacts with AUNIP; leading to recruit RBBP8 to sites of DNA damage. Interacts with SAMHD1. Interacts with HDGFL2. Hyperphosphorylation upon ionizing radiation results in dissociation from BRCA1. Phosphorylation at Thr-843 by CDK1 is essential for the recruitment to DNA and the DNA repair function. Phosphorylation at Thr-843 and Thr-855 promote interaction with NBN and recruitment to double-strand breaks (DSBs). Phosphorylated on Ser-326 as cells enter G2 phase. Phosphorylated at Ser-326 as cells enter G2 phase. This phosphorylation is required for binding BRCA1 and for the G2/M DNA damage transition checkpoint control. Phosphorylation at Thr-315 is required for PIN1-binding, while phosphorylation at Ser-276 serves as a PIN1 isomerization site. Phosphorylation at Thr-315 is cell-cycle dependent. It steadily increases during S phase, peaks at late S/G2 phase, and drops at G1. Phosphorylation is not required for tetramerization. Binds to DNA more strongly when dephosphorylated. In terms of processing, ubiquitinated. Ubiquitination at multiple sites by BRCA1 (via its N-terminal RING domain) does not lead to its proteasomal degradation but instead the ubiquitinated RBBP8 binds to chromatin following DNA damage and may play a role in G2/M checkpoint control. Ubiquitinated by RNF138 at its N-terminus. Ubiquitinated through 'Lys-48' by the E3 CUL3-KLHL15 complex; this modification leads to proteasomal degradation. Ubiquitinated by the E3 FZR1/APC/C complex; this modification leads to proteasomal degradation.

It localises to the nucleus. Its subcellular location is the chromosome. Functionally, endonuclease that cooperates with the MRE11-RAD50-NBN (MRN) complex in DNA-end resection, the first step of double-strand break (DSB) repair through the homologous recombination (HR) pathway. HR is restricted to S and G2 phases of the cell cycle and preferentially repairs DSBs resulting from replication fork collapse. Key determinant of DSB repair pathway choice, as it commits cells to HR by preventing classical non-homologous end-joining (NHEJ). Specifically promotes the endonuclease activity of the MRN complex to clear DNA ends containing protein adducts: recruited to DSBs by NBN following phosphorylation by CDK1, and promotes the endonuclease activity of MRE11 to clear protein-DNA adducts and generate clean double-strand break ends. Functions downstream of the MRN complex and ATM, promotes ATR activation and its recruitment to DSBs in the S/G2 phase facilitating the generation of ssDNA. Component of the BRCA1-RBBP8 complex that regulates CHEK1 activation and controls cell cycle G2/M checkpoints on DNA damage. During immunoglobulin heavy chain class-switch recombination, promotes microhomology-mediated alternative end joining (A-NHEJ) and plays an essential role in chromosomal translocations. Binds preferentially to DNA Y-junctions and to DNA substrates with blocked ends and promotes intermolecular DNA bridging. The sequence is that of DNA endonuclease RBBP8 (Rbbp8) from Mus musculus (Mouse).